Reading from the N-terminus, the 169-residue chain is Phycobiliprotein beta chain (169 aa).

N72 is modified (N4-methylasparagine). (2R,3E)-phycocyanobilin is bound at residue C82.

It belongs to the phycobiliprotein family. In terms of assembly, heterodimer of an alpha and a beta chain. In terms of processing, contains one covalently linked bilin chromophore.

It localises to the cellular thylakoid membrane. Light-harvesting photosynthetic bile pigment-protein from the phycobiliprotein complex. This is a protein functionally equivalent to, but with weaker absorbance than, allophycocyanin beta chain. This Mastigocladus laminosus (Fischerella sp.) protein is Phycobiliprotein beta chain (apcD).